We begin with the raw amino-acid sequence, 114 residues long: Fumarate reductase subunit D (114 aa).

3 helical membrane passes run 25-45, 50-70, and 94-114; these read SGLA…FGII, IIAF…TIFP, and LIFY…VIAI.

It belongs to the FrdD family. In terms of assembly, part of an enzyme complex containing four subunits: a flavoprotein (FrdA), an iron-sulfur protein (FrdB), and two hydrophobic anchor proteins (FrdC and FrdD).

It localises to the cell inner membrane. Functionally, anchors the catalytic components of the fumarate reductase complex to the cell membrane, binds quinones. The sequence is that of Fumarate reductase subunit D from Mannheimia succiniciproducens (strain KCTC 0769BP / MBEL55E).